Here is a 649-residue protein sequence, read N- to C-terminus: Protein arginine N-methyltransferase 5 (649 aa).

The TIM barrel stretch occupies residues 10–300; it reads KSESRYCGVE…SPYLDYIAYI (291 aa). The SAM-dependent MTase PRMT-type domain maps to 321–627; sequence LQSPLQPLMD…CGATKVWYEW (307 aa). Tyrosine 337 contacts S-adenosyl-L-methionine. A protein is bound at residue phenylalanine 340. S-adenosyl-L-methionine contacts are provided by residues 346-347, glutamate 405, and 433-434; these read KY and DM. The a protein site is built by glutamate 449 and glutamate 458. Catalysis depends on proton donor/acceptor residues glutamate 449 and glutamate 458. Residues 479–649 are beta barrel; that stretch reads PSSYTSFIEP…SNGRSYWVGL (171 aa). Residues 491–507 are dimerization; it reads ASKLHNDIKAHKDIAHF.

The protein belongs to the class I-like SAM-binding methyltransferase superfamily. Protein arginine N-methyltransferase family.

It localises to the cytoplasm. It carries out the reaction L-arginyl-[protein] + 2 S-adenosyl-L-methionine = N(omega),N(omega)'-dimethyl-L-arginyl-[protein] + 2 S-adenosyl-L-homocysteine + 2 H(+). Methylates arginine residues in proteins such as histone H4. This is Protein arginine N-methyltransferase 5 (PRMT5) from Oryza sativa subsp. indica (Rice).